The sequence spans 415 residues: Ornithine cyclodeaminase (415 aa).

NAD(+)-binding residues include asparagine 241, alanine 242, aspartate 320, threonine 352, leucine 354, histidine 355, aspartate 373, aspartate 396, and valine 397.

Belongs to the AgrE/ArgZ ornithine cyclodeaminase family. Requires NAD(+) as cofactor.

The enzyme catalyses L-ornithine = L-proline + NH4(+). In terms of biological role, catalyzes the conversion of ornithine to proline, with the release of ammonia. The chain is Ornithine cyclodeaminase from Methanococcus maripaludis (strain DSM 14266 / JCM 13030 / NBRC 101832 / S2 / LL).